Here is a 59-residue protein sequence, read N- to C-terminus: Gallinacin-14 (59 aa).

The N-terminal stretch at 1–18 is a signal peptide; the sequence is MGIFLLFLVLLAVPQAAP. Disulfide bonds link Cys-25/Cys-54, Cys-32/Cys-47, and Cys-37/Cys-55.

Belongs to the beta-defensin family.

It is found in the secreted. Its subcellular location is the cytoplasmic granule. Has bactericidal activity. The chain is Gallinacin-14 (GAL14) from Gallus gallus (Chicken).